An 83-amino-acid chain; its full sequence is uncharacterized protein (83 aa).

The helical transmembrane segment at 58–80 (YWGYGAAYGISLGLIAGVALAGL) threads the bilayer.

The protein resides in the membrane. This is an uncharacterized protein from Bacillus subtilis (strain 168).